We begin with the raw amino-acid sequence, 246 residues long: Probable 2-phosphosulfolactate phosphatase (246 aa).

This sequence belongs to the ComB family. The cofactor is Mg(2+).

The enzyme catalyses (2R)-O-phospho-3-sulfolactate + H2O = (2R)-3-sulfolactate + phosphate. The protein is Probable 2-phosphosulfolactate phosphatase of Nostoc punctiforme (strain ATCC 29133 / PCC 73102).